Consider the following 1326-residue polypeptide: MNLNTSSNTGDTQRLKIASLDVKQILKNETELDITDNLRKKLHWAKKEKLEITTKHNAELASYESQIAKLRSEVEKGEALRQSLEYDLAVARKEAGLGRRAAEERLAEAHRIQEKLCAQNSELQAKTNETEKAFQTSQQKWKEECRRFEHDLEERDNMIQNCNREYDLLMKEKSRLEKTLQEALEKHQREKNEMESHIRETALEEFRLQEEQWEAERRELQFIVQEQDTAVQNMHKKVEKLETEHMDCSDLLRRQTSELEFSTQREERLRKEFEATTLRVRKLEENIEAERAAHLESKFNSEIIQLRIRDLEGALQVEKASQAEAVADLEIIKNEFKEVESAYEREKHNAQESFAKLNLLEKEYFSKNKKLNEDIEEQKKVIIDLSKRLQYNEKSCSELQEELVMAKKHQAFLVETCENNVKELESILDSFTVSGQWTSGIHKDKDKPPSFSVVLERLRRTLTDYQNKLEDASNEEKACNELDSTKQKIDSHTKNIKELQDKLADVNKELSHLHTKCADREALISTLKVELQNVLHCWEKEKAQAAQSESELQKLSQAFHKDAEEKLTFLHTLYQHLVAGCVLIKQPEGMLDKFSWSELCAVLQENVDALIADLNRANEKIRHLEYICKNKSDTMRELQQTQEDTFTKVAEQIKAQESCWHRQKKELELQYSELFLEVQKRAQKFQEIAEKNMEKLNHIEKSHEQLVLENSHFKKLLSQTQREQMSLLAACALMAGALYPLYSRSCALSTQRDFLQEQVNTFELFKLEIRTLAQALSTVEEKKQEEAKMKKKTFKGLIRIFRKGVIAVLAANRLKILGQSCASLFTWMESFKEGIGMLVCTGEPQDKHKFPKHQKEQLRCLQALSWLTSSDLLAAIISSMAELQDVIGKADPNSRICGHLLIGAAKNSFAKLMDKISLVMECIPLHSSRSITYVEKDSLVQRLAHGLHKVNTLALKYGLRGHVPITKSTASLQKQILGFTQRLHAAEVERRSLRLEVTEFKRSVNEMKKELDKAQGLQMQLNEFKQSKLITHEKFESACEELNNALLREEQAQMLLNEQAQQLQELNYKLELHSSEEADKNQTLGEAVKSLSEAKMELRRKDQSLRQLNRHLTQLEQDKRRLEENIHDAESALRMAAKDKECVANHMRAVENTLHKVRDQISLSWSAASRNDFTLQLPKLHLETFAMEGLKGGPEVVACQAMIKSFMDVYQLASTRIMTLEKEMTSHRSHIAALKSELHTACLRENASLQSIGSRDHSNLSIPSRAPLPADTTGIGDFLPLKAELDTTYTFLKETFINTVPHALTSSHSSPVTMSANANRPTQIGL.

Coiled coils occupy residues 53-294, 323-391, 450-561, 597-630, 660-707, 765-792, 979-1143, and 1217-1241; these read TTKH…RAAH, AEAV…RLQY, SFSV…AFHK, SELC…ICKN, WHRQ…EQLV, FKLE…MKKK, FTQR…KECV, and IMTL…LHTA. The tract at residues 1306–1326 is disordered; sequence SSHSSPVTMSANANRPTQIGL.

In Homo sapiens (Human), this protein is Coiled-coil domain-containing protein 171 (CCDC171).